Consider the following 807-residue polypeptide: MTLTTTTTASSAESQAKMDVKGGALPGEENLPTSEMDLLAKLEAANKLIESDAKSLNSLHSTHSRKNSDTSQISLTSSGNSVAEEDIWTTWATILNDWEGALKRKNPCVSELVRRGIPHHFRAIVWQQLSGASDGDKKQYAEYIKATSACEKVIRRDIARTYPEVEFFKEKDGPGQEALFNVIKAYSLHDREVGYCQGSGFIVGLLLMQMPEEEAFAVLVQIMQQHRMRHMFKPSMSELGLCMYQLENLVQEQIPDMHIHFQQQGFQTTMYASSWFLTLYTTTLNVNLSCRIMDVFLSEGMEFIFKVALALLLTGKDTLLCLDMEAMLKFFQKELPGRVEADVEGFFNLAYSIKLNTKRMKKMEKEYQDLKKKEQEEMAELRRLRRENCLLKQRNELLEAESAELADRLVRGQVSRAEEEETSYAIQTELMQLRRSYLEVSHQLENANEEVRGLSLRLQENNVSIDSNNSRQSSIDELCMKEEALKQRDEMVSCLLEELVKVRQGLAESEDQIRNLKAKVEELEEDKKTLRETTPDNSVAHLQDELIASKLREAEASLSLKDLKQRVQELSSQWQRQLAENQRSESERTTNAVDSTPKKLLTNFFDSSKSSEHTQKLEEELMTTRIREMETLTELKELRLKVMELETQVQVSTNQLRRQDEEHKKLKEELEMAVTREKDMSNKAREQQHRYSDLESRMKDELMNVKIKFTEQSQTVAELKQEISRLETKNSEMLAEGELRANLDDSDKVRDLQDRLADMKAELTALKSRGKFPGAKLRSSSIQSIESTEIDFNDLNMVRRGSTELST.

Residues 1–31 (MTLTTTTTASSAESQAKMDVKGGALPGEENL) form a disordered region. Threonine 33 is subject to Phosphothreonine. Residues serine 58 and serine 64 each carry the phosphoserine modification. Residues 116–300 (GIPHHFRAIV…RIMDVFLSEG (185 aa)) enclose the Rab-GAP TBC domain. Coiled-coil stretches lie at residues 352–463 (SIKL…ENNV), 494–583 (CLLE…ENQR), and 627–772 (REME…RGKF).

As to quaternary structure, interacts with Rab11.

It localises to the cytoplasm. Its subcellular location is the endosome. Functions as a GTPase-activating protein (GAP). During border cell migration in the ovary, acts as a GAP for Rab11 and is necessary for the maintenance of active receptor tyrosine kinases at the leading edge. The chain is Ecotropic viral integration site 5 ortholog (Evi5) from Drosophila melanogaster (Fruit fly).